The following is a 163-amino-acid chain: Nucleotide-binding protein APJL_1242 (163 aa).

This sequence belongs to the YajQ family.

Its function is as follows. Nucleotide-binding protein. This is Nucleotide-binding protein APJL_1242 from Actinobacillus pleuropneumoniae serotype 3 (strain JL03).